Reading from the N-terminus, the 286-residue chain is ATP synthase gamma chain (286 aa).

It belongs to the ATPase gamma chain family. In terms of assembly, F-type ATPases have 2 components, CF(1) - the catalytic core - and CF(0) - the membrane proton channel. CF(1) has five subunits: alpha(3), beta(3), gamma(1), delta(1), epsilon(1). CF(0) has three main subunits: a, b and c.

The protein resides in the cell inner membrane. Its function is as follows. Produces ATP from ADP in the presence of a proton gradient across the membrane. The gamma chain is believed to be important in regulating ATPase activity and the flow of protons through the CF(0) complex. The protein is ATP synthase gamma chain of Pseudomonas fluorescens (strain SBW25).